The primary structure comprises 169 residues: Protein GrpE (169 aa).

Residues 1–25 (MSEEKQNGQIQEETVENSENQNNEL) are disordered. The segment covering 7 to 23 (NGQIQEETVENSENQNN) has biased composition (polar residues).

This sequence belongs to the GrpE family. In terms of assembly, homodimer.

It localises to the cytoplasm. Its function is as follows. Participates actively in the response to hyperosmotic and heat shock by preventing the aggregation of stress-denatured proteins, in association with DnaK and GrpE. It is the nucleotide exchange factor for DnaK and may function as a thermosensor. Unfolded proteins bind initially to DnaJ; upon interaction with the DnaJ-bound protein, DnaK hydrolyzes its bound ATP, resulting in the formation of a stable complex. GrpE releases ADP from DnaK; ATP binding to DnaK triggers the release of the substrate protein, thus completing the reaction cycle. Several rounds of ATP-dependent interactions between DnaJ, DnaK and GrpE are required for fully efficient folding. This chain is Protein GrpE, found in Campylobacter lari (strain RM2100 / D67 / ATCC BAA-1060).